The primary structure comprises 205 residues: dITP/XTP pyrophosphatase (205 aa).

A substrate-binding site is contributed by 8 to 13 (SGNKGK). Catalysis depends on Asp-69, which acts as the Proton acceptor. A Mg(2+)-binding site is contributed by Asp-69. Residues Ser-70, 153-156 (HGYD), Lys-176, and 181-182 (HR) each bind substrate.

Belongs to the HAM1 NTPase family. Homodimer. It depends on Mg(2+) as a cofactor.

It catalyses the reaction XTP + H2O = XMP + diphosphate + H(+). The catalysed reaction is dITP + H2O = dIMP + diphosphate + H(+). It carries out the reaction ITP + H2O = IMP + diphosphate + H(+). Its function is as follows. Pyrophosphatase that catalyzes the hydrolysis of nucleoside triphosphates to their monophosphate derivatives, with a high preference for the non-canonical purine nucleotides XTP (xanthosine triphosphate), dITP (deoxyinosine triphosphate) and ITP. Seems to function as a house-cleaning enzyme that removes non-canonical purine nucleotides from the nucleotide pool, thus preventing their incorporation into DNA/RNA and avoiding chromosomal lesions. The protein is dITP/XTP pyrophosphatase of Shewanella oneidensis (strain ATCC 700550 / JCM 31522 / CIP 106686 / LMG 19005 / NCIMB 14063 / MR-1).